The chain runs to 600 residues: Estrogen receptor (600 aa).

Residues 1-189 are modulating (transactivation AF-1); mediates interaction with MACROD1; it reads MTMTLHTKAS…IMESAKETRY (189 aa). Ser-10 carries O-linked (GlcNAc) serine glycosylation. Residues 35–47 are required for interaction with NCOA1; that stretch reads MERALGEVYVDNS. The tract at residues 35–179 is interaction with DDX5; self-association; the sequence is MERALGEVYV…LSSSSEKGNM (145 aa). Ser-109 and Ser-111 each carry phosphoserine; by CDK2. Position 123 is a phosphoserine (Ser-123). The tract at residues 148-177 is disordered; that stretch reads DTGPPAFYRSNSDNRRQNGRERLSSSSEKG. Basic and acidic residues predominate over residues 159 to 170; it reads SDNRRQNGRERL. Residue Ser-172 is modified to Phosphoserine; by CK2. NR C4-type zinc fingers lie at residues 190–210 and 226–250; these read CAVC…CEGC and CPAT…LRKC. The segment at residues 190–255 is a DNA-binding region (nuclear receptor); sequence CAVCNDYASG…RLRKCYEVGM (66 aa). The segment at 190–315 is mediates interaction with DNTTIP2; it reads CAVCNDYASG…TKKNSPALSL (126 aa). The interval 256–315 is hinge; the sequence is MKGGIRKDRRGGRMLKHKRQRDDLEGRNEMGTSGDMRAANLWPSPLVIKHTKKNSPALSL. Asymmetric dimethylarginine; by PRMT1 is present on Arg-265. The interaction with AKAP13 stretch occupies residues 267 to 600; that stretch reads GRMLKHKRQR…PEAEGFPNTI (334 aa). The interval 269 to 600 is self-association; the sequence is MLKHKRQRDD…PEAEGFPNTI (332 aa). One can recognise an NR LBD domain in the interval 316–552; that stretch reads TADQMVSALL…DLLLEMLDAH (237 aa). The interval 316–600 is transactivation AF-2; sequence TADQMVSALL…PEAEGFPNTI (285 aa). 17beta-estradiol-binding residues include Glu-358 and Arg-399. A lipid anchor (S-palmitoyl cysteine) is attached at Cys-452. Position 529 (His-529) interacts with 17beta-estradiol. At Tyr-542 the chain carries Phosphotyrosine; by Tyr-kinases. Positions 558 to 581 are disordered; it reads ASRMGVPPEEPSQSQLTTTSSTSA. The segment covering 569-581 has biased composition (low complexity); sequence SQSQLTTTSSTSA. A glycan (O-linked (GlcNAc) threonine) is linked at Thr-576.

The protein belongs to the nuclear hormone receptor family. NR3 subfamily. In terms of assembly, interacts with BCAS3. Binds DNA as a homodimer. Can form a heterodimer with ESR2. Interacts with coactivator NCOA5. Interacts with PELP1, the interaction is enhanced by 17-beta-estradiol; the interaction increases ESR1 transcriptional activity. Interacts with NCOA7; the interaction is ligand-inducible. Interacts with AKAP13, CUEDC2, HEXIM1, KDM5A, MAP1S, SMARD1, and UBE1C. Interacts with MUC1; the interaction is stimulated by 7 beta-estradiol (E2) and enhances ESR1-mediated transcription. Interacts with DNTTIP2, and UIMC1. Interacts with KMT2D/MLL2. Interacts with ATAD2; the interaction is enhanced by estradiol. Interacts with KIF18A and LDB1. Interacts with RLIM (via its C-terminus). Interacts with MACROD1. Interacts with SH2D4A and PLCG. Interacts with SH2D4A; the interaction blocks binding to PLCG and inhibits estrogen-induced cell proliferation. Interacts with DYNLL1. Interacts with CCDC62; the interaction requires estradiol and appears to enhance the transcription of target genes. Interacts with NR2C1; the interaction prevents homodimerization of ESR1 and suppresses its transcriptional activity and cell growth. Interacts with DNAAF4. Interacts with PRMT2. Interacts with RBFOX2. Interacts with EP300; the interaction is estrogen-dependent and enhanced by CITED1. Interacts with CITED1; the interaction is estrogen-dependent. Interacts with FAM120B, FOXL2, PHB2 and SLC30A9. Interacts with coactivators NCOA3 and NCOA6. Interacts with STK3/MST2 only in the presence of SAV1 and vice-versa. Binds to CSNK1D. Interacts with NCOA2; NCOA2 can interact with ESR1 AF-1 and AF-2 domains simultaneously and mediate their transcriptional synergy. Interacts with DDX5. Interacts with NCOA1; the interaction seems to require a self-association of N-terminal and C-terminal regions. Interacts with ZNF366, DDX17, NFKB1, RELA, SP1 and SP3. Interacts with NRIP1. Interacts with GPER1; the interaction occurs in an estrogen-dependent manner. Interacts with TRIP4 (ufmylated); estrogen dependent. Interacts with LMTK3; the interaction phosphorylates ESR1 (in vitro) and protects it against proteasomal degradation. Interacts with CCAR2 (via N-terminus) in a ligand-independent manner. Interacts with ZFHX3. Interacts with SFR1 in a ligand-dependent and -independent manner. Interacts with DCAF13, LATS1 and DCAF1; regulates ESR1 ubiquitination and ubiquitin-mediated proteasomal degradation. Interacts (via DNA-binding domain) with POU4F2 (C-terminus); this interaction increases the estrogen receptor ESR1 transcriptional activity in a DNA- and ligand 17-beta-estradiol-independent manner. Interacts with ESRRB isoform 1. Interacts with UBE3A and WBP2. Interacts with GTF2B. Interacts with RBM39. In the absence of hormonal ligand, interacts with TACC1. Interacts with PI3KR1 or PI3KR2 and PTK2/FAK1. Interacts with SRC. Interacts with BAG1; the interaction is promoted in the absence of estradiol (17-beta-estradiol/E2). Interacts with and ubiquitinated by STUB1; the interaction is promoted in the absence of estradiol (17-beta-estradiol/E2). Interacts with NEDD8. In terms of processing, phosphorylated by cyclin A/CDK2 and CK1. Phosphorylation probably enhances transcriptional activity. Dephosphorylation at Ser-123 by PPP5C inhibits its transactivation activity. Phosphorylated by LMTK3 (in vitro). Ubiquitinated; regulated by LATS1 via DCAF1 it leads to ESR1 proteasomal degradation. Deubiquitinated by OTUB1. Ubiquitinated by STUB1/CHIP; in the CA1 hippocampal region following loss of endogenous circulating estradiol (17-beta-estradiol/E2). Ubiquitinated by UBR5, leading to its degradation: UBR5 specifically recognizes and binds ligand-bound ESR1 when it is not associated with coactivators (NCOAs). In presence of NCOAs, the UBR5-degron is not accessible, preventing its ubiquitination and degradation. Post-translationally, palmitoylated at Cys-452 by ZDHHC7 and ZDHHC21. This modification is required for plasma membrane targeting and for rapid intracellular signaling via ERK and AKT kinases and cAMP generation, but not for signaling mediated by the nuclear hormone receptor. In terms of processing, dimethylated by PRMT1 at Arg-265. The methylation may favor cytoplasmic localization. Demethylated by JMJD6 at Arg-265. Expressed in the CA1 region of the hippocampus, expression decreases with age (at protein level). Expressed in the uterus (at protein level).

It localises to the nucleus. It is found in the cytoplasm. Its subcellular location is the golgi apparatus. The protein resides in the cell membrane. Functionally, nuclear hormone receptor. The steroid hormones and their receptors are involved in the regulation of eukaryotic gene expression and affect cellular proliferation and differentiation in target tissues. Ligand-dependent nuclear transactivation involves either direct homodimer binding to a palindromic estrogen response element (ERE) sequence or association with other DNA-binding transcription factors, such as AP-1/c-Jun, c-Fos, ATF-2, Sp1 and Sp3, to mediate ERE-independent signaling. Ligand binding induces a conformational change allowing subsequent or combinatorial association with multiprotein coactivator complexes through LXXLL motifs of their respective components. Mutual transrepression occurs between the estrogen receptor (ER) and NF-kappa-B in a cell-type specific manner. Decreases NF-kappa-B DNA-binding activity and inhibits NF-kappa-B-mediated transcription from the IL6 promoter and displace RELA/p65 and associated coregulators from the promoter. Recruited to the NF-kappa-B response element of the CCL2 and IL8 promoters and can displace CREBBP. Present with NF-kappa-B components RELA/p65 and NFKB1/p50 on ERE sequences. Can also act synergistically with NF-kappa-B to activate transcription involving respective recruitment adjacent response elements; the function involves CREBBP. Can activate the transcriptional activity of TFF1. Also mediates membrane-initiated estrogen signaling involving various kinase cascades. Essential for MTA1-mediated transcriptional regulation of BRCA1 and BCAS3. Maintains neuronal survival in response to ischemic reperfusion injury when in the presence of circulating estradiol (17-beta-estradiol/E2). The sequence is that of Estrogen receptor (Esr1) from Rattus norvegicus (Rat).